Reading from the N-terminus, the 132-residue chain is Aspartate 1-decarboxylase (132 aa).

Ser25 (schiff-base intermediate with substrate; via pyruvic acid) is an active-site residue. Ser25 is modified (pyruvic acid (Ser)). Thr57 lines the substrate pocket. The active-site Proton donor is the Tyr58. 73-75 (GAA) contributes to the substrate binding site.

This sequence belongs to the PanD family. Heterooctamer of four alpha and four beta subunits. The cofactor is pyruvate. Is synthesized initially as an inactive proenzyme, which is activated by self-cleavage at a specific serine bond to produce a beta-subunit with a hydroxyl group at its C-terminus and an alpha-subunit with a pyruvoyl group at its N-terminus.

The protein localises to the cytoplasm. The enzyme catalyses L-aspartate + H(+) = beta-alanine + CO2. It functions in the pathway cofactor biosynthesis; (R)-pantothenate biosynthesis; beta-alanine from L-aspartate: step 1/1. Its function is as follows. Catalyzes the pyruvoyl-dependent decarboxylation of aspartate to produce beta-alanine. The protein is Aspartate 1-decarboxylase of Geotalea uraniireducens (strain Rf4) (Geobacter uraniireducens).